Here is a 658-residue protein sequence, read N- to C-terminus: Sulfate transporter 3.1 (658 aa).

Residues 1–85 (MGTEDYTFPQ…RYNLKFFKSD (85 aa)) lie on the Cytoplasmic side of the membrane. The chain crosses the membrane as a helical span at residues 86–106 (LIAGITIASLAIPQGISYAKL). Over 107–108 (AN) the chain is Extracellular. The helical transmembrane segment at 109–129 (LPPILGLYSSFVPPLVYAVLG) threads the bilayer. Residues 130-133 (SSRD) are Cytoplasmic-facing. A helical membrane pass occupies residues 134-154 (LAVGTVAVASLLTGAMLSKEV). At 155–163 (DAEKDPKLY) the chain is on the extracellular side. The chain crosses the membrane as a helical span at residues 164–184 (LHLAFTATFFAGVLEASLGIF). Residue Arg-185 is a topological domain, cytoplasmic. Residues 186–206 (LGFIVDFLSHATIVGFMGGAA) traverse the membrane as a helical segment. Over 207–245 (TVVSLQQLKGIFGLKHFTDSTDVISVMRSVFSQTHEWRW) the chain is Extracellular. A helical membrane pass occupies residues 246 to 266 (ESGVLGCGFLFFLLSTRYFSI). The Cytoplasmic portion of the chain corresponds to 267–271 (KKPKF). A helical membrane pass occupies residues 272–292 (FWVAAMAPLTSVILGSLLVYF). The Extracellular portion of the chain corresponds to 293-332 (THAERHGVQVIGDLKKGLNPLSGSDLIFTSPYMSTAVKTG). Residues 333–353 (LITGIIALAEGVAVGRSFAMF) traverse the membrane as a helical segment. At 354–363 (KNYNIDGNKE) the chain is on the cytoplasmic side. The chain crosses the membrane as a helical span at residues 364 to 384 (MIAFGMMNIVGSFTSCYLTTG). Over 385–398 (PFSRSAVNYNAGCK) the chain is Extracellular. The chain crosses the membrane as a helical span at residues 399-419 (TAMSNIVMAIAVMFTLLFLTP). Residues 420 to 425 (LFHYTP) lie on the Cytoplasmic side of the membrane. The chain crosses the membrane as a helical span at residues 426–446 (LVVLSAIIISAMLGLIDYQAA). Residues 447 to 464 (IHLWKVDKFDFLVCMSAY) are Extracellular-facing. A helical transmembrane segment spans residues 465–485 (VGVVFGSVEIGLVVAVAISIA). Over 486-658 (RLLLFVSRPK…ASKNEPWNNV (173 aa)) the chain is Cytoplasmic. Residues 513–637 (QYPSSRTVPG…LTVGEAVEAC (125 aa)) form the STAS domain.

The protein belongs to the SLC26A/SulP transporter (TC 2.A.53) family. As to expression, expressed only in leaves.

It is found in the membrane. Functionally, h(+)/sulfate cotransporter that may play a role in the regulation of sulfate assimilation. The protein is Sulfate transporter 3.1 (SULTR3;1) of Arabidopsis thaliana (Mouse-ear cress).